The sequence spans 127 residues: uncharacterized protein (127 aa).

The segment covering 1–17 has biased composition (polar residues); the sequence is MQGSVQIQKGNISSSYT. Residues 1-36 form a disordered region; sequence MQGSVQIQKGNISSSYTPEKHPSHPTSANGSMSPKR.

This is an uncharacterized protein from Treponema pallidum (strain Nichols).